Here is an 84-residue protein sequence, read N- to C-terminus: MNILSFIVYYNGEINRIYFNMGQKNSFPMKVSTIEFLNRLSNEPILEISNETTNILKLSINSLESNNNLIDLSKLTLNSIITLN.

This is an uncharacterized protein from Dictyostelium discoideum (Social amoeba).